The sequence spans 488 residues: Ammonium transporter 1 member 1 (488 aa).

The next 11 helical transmembrane spans lie at threonine 47 to glycine 69, leucine 90 to isoleucine 109, phenylalanine 129 to alanine 148, phenylalanine 153 to phenylalanine 175, valine 195 to leucine 217, histidine 238 to phenylalanine 257, alanine 281 to glycine 303, valine 316 to valine 333, tryptophan 337 to leucine 356, alanine 368 to alanine 387, and histidine 418 to leucine 440.

It belongs to the ammonia transporter channel (TC 1.A.11.2) family. As to expression, root hairs and leaves.

It is found in the membrane. Its function is as follows. Ammonium transporter that may be involved in ammonium uptake from the soil. The sequence is that of Ammonium transporter 1 member 1 (AMT1-1) from Solanum lycopersicum (Tomato).